A 207-amino-acid chain; its full sequence is MVSTMLSGLVLWLTFGWTPALAYSPRTPDRVSETDIQRLLHGVMEQLGIARPRVEYPAHQAMNLVGPQSIEGGAHEGLQHLGPFGNIPNIVAELTGDNTPKDFSEDQGYPDPPNPCPIGKTDDGCLENTPDTAEFSREFQLHQHLFDPEHDYPGLGKWNKKLLYEKMKGGQRRKRRSVNPYLQGQRLDNVVAKKSVPHFSDEDKDPE.

A signal peptide spans 1 to 22 (MVSTMLSGLVLWLTFGWTPALA). A disulfide bridge connects residues C116 and C125. Residues S136 and S200 each carry the phosphoserine modification. The disordered stretch occupies residues 168–207 (KGGQRRKRRSVNPYLQGQRLDNVVAKKSVPHFSDEDKDPE).

This sequence belongs to the 7B2 family. In terms of assembly, interacts with PCSK2/PC2 early in the secretory pathway. Dissociation occurs at later stages. Post-translationally, proteolytically cleaved in the Golgi by a furin-like convertase to generate bioactive peptides. Sulfated on tyrosine residues.

Its subcellular location is the secreted. Its function is as follows. Acts as a molecular chaperone for PCSK2/PC2, preventing its premature activation in the regulated secretory pathway. Binds to inactive PCSK2 in the endoplasmic reticulum and facilitates its transport from there to later compartments of the secretory pathway where it is proteolytically matured and activated. Also required for cleavage of PCSK2 but does not appear to be involved in its folding. Plays a role in regulating pituitary hormone secretion. The C-terminal peptide inhibits PCSK2 in vitro. In Sus scrofa (Pig), this protein is Neuroendocrine protein 7B2 (SCG5).